A 183-amino-acid chain; its full sequence is UPF0302 protein BH3876 (183 aa).

Belongs to the UPF0302 family.

This Halalkalibacterium halodurans (strain ATCC BAA-125 / DSM 18197 / FERM 7344 / JCM 9153 / C-125) (Bacillus halodurans) protein is UPF0302 protein BH3876.